The primary structure comprises 737 residues: DNA topoisomerase 4 subunit A (737 aa).

One can recognise a Topo IIA-type catalytic domain in the interval 32 to 496 (LPDVRDGLKP…SFEEVTLTNQ (465 aa)). Catalysis depends on Y120, which acts as the O-(5'-phospho-DNA)-tyrosine intermediate.

The protein belongs to the type II topoisomerase GyrA/ParC subunit family. ParC type 1 subfamily. In terms of assembly, heterotetramer composed of ParC and ParE.

Its subcellular location is the cell membrane. The enzyme catalyses ATP-dependent breakage, passage and rejoining of double-stranded DNA.. In terms of biological role, topoisomerase IV is essential for chromosome segregation. It relaxes supercoiled DNA. Performs the decatenation events required during the replication of a circular DNA molecule. The sequence is that of DNA topoisomerase 4 subunit A from Rickettsia felis (strain ATCC VR-1525 / URRWXCal2) (Rickettsia azadi).